The primary structure comprises 434 residues: Ribosomal protein uS12 methylthiotransferase RimO (434 aa).

The region spanning 4-122 (NRVDVITLGC…LISHLGKSYY (119 aa)) is the MTTase N-terminal domain. [4Fe-4S] cluster is bound by residues C13, C51, C85, C146, C150, and C153. Residues 132 to 363 (TTPRHYAYLK…MAVQERISAA (232 aa)) enclose the Radical SAM core domain. One can recognise a TRAM domain in the interval 366 to 434 (EAKIGSRLHV…PFDLYARIVD (69 aa)).

This sequence belongs to the methylthiotransferase family. RimO subfamily. The cofactor is [4Fe-4S] cluster.

It is found in the cytoplasm. The catalysed reaction is L-aspartate(89)-[ribosomal protein uS12]-hydrogen + (sulfur carrier)-SH + AH2 + 2 S-adenosyl-L-methionine = 3-methylsulfanyl-L-aspartate(89)-[ribosomal protein uS12]-hydrogen + (sulfur carrier)-H + 5'-deoxyadenosine + L-methionine + A + S-adenosyl-L-homocysteine + 2 H(+). In terms of biological role, catalyzes the methylthiolation of an aspartic acid residue of ribosomal protein uS12. In Porphyromonas gingivalis (strain ATCC BAA-308 / W83), this protein is Ribosomal protein uS12 methylthiotransferase RimO.